The following is a 406-amino-acid chain: Formate-dependent phosphoribosylglycinamide formyltransferase (406 aa).

Residues 27-28 (EL) and Glu-87 each bind N(1)-(5-phospho-beta-D-ribosyl)glycinamide. ATP contacts are provided by residues Arg-120, Lys-162, 167–172 (SSGKGQ), 202–205 (EGFI), and Glu-210. Residues 125 to 320 (RLAAETLGLP…EFELHARALL (196 aa)) form the ATP-grasp domain. Mg(2+)-binding residues include Glu-279 and Glu-291. N(1)-(5-phospho-beta-D-ribosyl)glycinamide-binding positions include Asp-298, Lys-367, and 374 to 375 (RR).

The protein belongs to the PurK/PurT family. In terms of assembly, homodimer.

It catalyses the reaction N(1)-(5-phospho-beta-D-ribosyl)glycinamide + formate + ATP = N(2)-formyl-N(1)-(5-phospho-beta-D-ribosyl)glycinamide + ADP + phosphate + H(+). It participates in purine metabolism; IMP biosynthesis via de novo pathway; N(2)-formyl-N(1)-(5-phospho-D-ribosyl)glycinamide from N(1)-(5-phospho-D-ribosyl)glycinamide (formate route): step 1/1. Functionally, involved in the de novo purine biosynthesis. Catalyzes the transfer of formate to 5-phospho-ribosyl-glycinamide (GAR), producing 5-phospho-ribosyl-N-formylglycinamide (FGAR). Formate is provided by PurU via hydrolysis of 10-formyl-tetrahydrofolate. This is Formate-dependent phosphoribosylglycinamide formyltransferase from Bordetella bronchiseptica (strain ATCC BAA-588 / NCTC 13252 / RB50) (Alcaligenes bronchisepticus).